The primary structure comprises 167 residues: CS6 fimbrial subunit B (167 aa).

A signal peptide spans 1–21 (MLKKIIPAIVLIAGTSGVVNA).

The protein localises to the fimbrium. This is CS6 fimbrial subunit B (cssB) from Escherichia coli.